The primary structure comprises 117 residues: Large ribosomal subunit protein bL20c (117 aa).

It belongs to the bacterial ribosomal protein bL20 family.

Its subcellular location is the plastid. The protein resides in the chloroplast. Its function is as follows. Binds directly to 23S ribosomal RNA and is necessary for the in vitro assembly process of the 50S ribosomal subunit. It is not involved in the protein synthesizing functions of that subunit. The polypeptide is Large ribosomal subunit protein bL20c (Citrus sinensis (Sweet orange)).